The chain runs to 437 residues: Glycogen synthase (437 aa).

Lysine 15 is a binding site for ADP-alpha-D-glucose.

This sequence belongs to the glycosyltransferase 1 family. Bacterial/plant glycogen synthase subfamily.

The catalysed reaction is [(1-&gt;4)-alpha-D-glucosyl](n) + ADP-alpha-D-glucose = [(1-&gt;4)-alpha-D-glucosyl](n+1) + ADP + H(+). It functions in the pathway glycan biosynthesis; glycogen biosynthesis. Its function is as follows. Synthesizes alpha-1,4-glucan chains using ADP-glucose. The protein is Glycogen synthase of Thermus thermophilus (strain ATCC BAA-163 / DSM 7039 / HB27).